The primary structure comprises 94 residues: Integration host factor subunit beta (94 aa).

It belongs to the bacterial histone-like protein family. In terms of assembly, heterodimer of an alpha and a beta chain.

Its function is as follows. This protein is one of the two subunits of integration host factor, a specific DNA-binding protein that functions in genetic recombination as well as in transcriptional and translational control. This is Integration host factor subunit beta from Chelativorans sp. (strain BNC1).